A 345-amino-acid polypeptide reads, in one-letter code: Phenylalanine--tRNA ligase alpha subunit (345 aa).

Position 272 (E272) interacts with Mg(2+).

This sequence belongs to the class-II aminoacyl-tRNA synthetase family. Phe-tRNA synthetase alpha subunit type 1 subfamily. In terms of assembly, tetramer of two alpha and two beta subunits. The cofactor is Mg(2+).

The protein localises to the cytoplasm. It catalyses the reaction tRNA(Phe) + L-phenylalanine + ATP = L-phenylalanyl-tRNA(Phe) + AMP + diphosphate + H(+). In Prochlorococcus marinus (strain MIT 9312), this protein is Phenylalanine--tRNA ligase alpha subunit.